We begin with the raw amino-acid sequence, 303 residues long: Glycine--tRNA ligase alpha subunit (303 aa).

This sequence belongs to the class-II aminoacyl-tRNA synthetase family. Tetramer of two alpha and two beta subunits.

The protein resides in the cytoplasm. The enzyme catalyses tRNA(Gly) + glycine + ATP = glycyl-tRNA(Gly) + AMP + diphosphate. This chain is Glycine--tRNA ligase alpha subunit, found in Klebsiella pneumoniae (strain 342).